We begin with the raw amino-acid sequence, 433 residues long: Enolase (433 aa).

Gln-167 contacts (2R)-2-phosphoglycerate. Glu-209 functions as the Proton donor in the catalytic mechanism. Asp-246, Glu-291, and Asp-318 together coordinate Mg(2+). Residues Lys-343, Arg-372, Ser-373, and Lys-394 each contribute to the (2R)-2-phosphoglycerate site. The Proton acceptor role is filled by Lys-343.

The protein belongs to the enolase family. Component of the RNA degradosome, a multiprotein complex involved in RNA processing and mRNA degradation. Mg(2+) is required as a cofactor.

The protein resides in the cytoplasm. It is found in the secreted. The protein localises to the cell surface. The enzyme catalyses (2R)-2-phosphoglycerate = phosphoenolpyruvate + H2O. Its pathway is carbohydrate degradation; glycolysis; pyruvate from D-glyceraldehyde 3-phosphate: step 4/5. Its function is as follows. Catalyzes the reversible conversion of 2-phosphoglycerate (2-PG) into phosphoenolpyruvate (PEP). It is essential for the degradation of carbohydrates via glycolysis. This chain is Enolase, found in Vibrio vulnificus (strain YJ016).